Here is a 243-residue protein sequence, read N- to C-terminus: Transmembrane protein 174 (243 aa).

2 helical membrane passes run 40–60 (LLFSGIFLGLVGITFTVMGWI) and 73–93 (LLGPILLSVGVTFILISVCKF). The interval 205–229 (AGHDRPSSDADQLEGTQMGEEERVC) is disordered.

In terms of assembly, interacts with SLC34A1; regulates SLC34A1 internalization by PTH and FGF23.

The protein localises to the endoplasmic reticulum membrane. It localises to the apical cell membrane. In terms of biological role, regulator of plasma phosphate homeostasis. Decreases serum inorganic phosphate (Pi) uptake by regulating the sodium-phosphate cotransporter SLC34A1 trafficking by PTH and FGF23 in the kidney. The chain is Transmembrane protein 174 (Tmem174) from Rattus norvegicus (Rat).